The chain runs to 232 residues: Probable anion ABC transporter permease protein HVO_1887 (232 aa).

The region spanning 16–217 is the ABC transmembrane type-1 domain; that stretch reads TAVSLYVSTA…ALVLGVNALG (202 aa). Transmembrane regions (helical) follow at residues 23-43, 55-75, 93-113, 146-166, and 198-218; these read STAAVALSAALGLPISLAVGF, VISTGMGFPSVVVGLVVLLVL, MILSQTILALPVLVSVSLSAV, IVTALLAAYGRAISEVGSVLI, and TGIALGAILLALVLGVNALGA.

The protein belongs to the binding-protein-dependent transport system permease family. As to quaternary structure, the complex is composed of two ATP-binding proteins (HVO_1886), two transmembrane proteins (HVO_1887) and a solute-binding protein (HVO_1888).

Its subcellular location is the cell membrane. Functionally, part of an ABC transporter complex involved in anions import. Responsible for the translocation of the substrate across the membrane. The polypeptide is Probable anion ABC transporter permease protein HVO_1887 (Haloferax volcanii (strain ATCC 29605 / DSM 3757 / JCM 8879 / NBRC 14742 / NCIMB 2012 / VKM B-1768 / DS2) (Halobacterium volcanii)).